A 606-amino-acid polypeptide reads, in one-letter code: UPF0329 protein ECU06_0090 (606 aa).

The interval 317-401 is disordered; sequence KKEEERREEE…SREACSKERN (85 aa). Basic and acidic residues predominate over residues 328–353; sequence EKKRKEEVVQRNVEELLRGEEEEKKG. A compositionally biased stretch (basic residues) spans 354 to 367; that stretch reads AKAKRKSKKKKKGS. Positions 381-401 are enriched in basic and acidic residues; the sequence is SENREAQEMEDSREACSKERN.

This sequence belongs to the UPF0329 family.

The protein is UPF0329 protein ECU06_0090 of Encephalitozoon cuniculi (strain GB-M1) (Microsporidian parasite).